Consider the following 30-residue polypeptide: Dermaseptin-3.1TR (30 aa).

Expressed by the skin glands.

It localises to the secreted. Has antimicrobial activity. The chain is Dermaseptin-3.1TR from Phyllomedusa trinitatis (Trinidad leaf frog).